Consider the following 266-residue polypeptide: GTP-binding protein Rhes (266 aa).

26 to 33 (GASRVGKS) serves as a coordination point for GTP. An Effector region motif is present at residues 48–56 (YTPTIEDFH). Residues 73-77 (DTSGN) and 140-143 (NKND) each bind GTP. Residues 189–235 (MAKLPHEMSPALHHKISVQYGDAFHPRPFCMRRTKVAGAYGMVSPFA) form an interaction with GNB1, GNB2 and GNB3 region. A Cysteine methyl ester modification is found at cysteine 263. The S-farnesyl cysteine moiety is linked to residue cysteine 263. Residues 264–266 (SIQ) constitute a propeptide, removed in mature form.

Belongs to the small GTPase superfamily. RasD family. In terms of assembly, monomer (Potential). Interacts with PIK3CA and UBE2I. Interacts with GNB1, GNB2 and GNB3. In terms of processing, farnesylated. Farnesylation is required for membrane targeting. In terms of tissue distribution, highly expressed in brain; prominently in the striatum and weakly in kidney, thyroid, lung, heart and testis. Not expressed in liver. Expressed in pancreatic cell lines and in a embryonic stem cell line.

The protein resides in the cell membrane. In terms of biological role, GTPase signaling protein that binds to and hydrolyzes GTP. Regulates signaling pathways involving G-proteins-coupled receptor and heterotrimeric proteins such as GNB1, GNB2 and GNB3. May be involved in selected striatal competencies, mainly locomotor activity and motor coordination. The sequence is that of GTP-binding protein Rhes (Rasd2) from Mus musculus (Mouse).